The following is a 153-amino-acid chain: 1,4-dihydroxy-2-naphthoyl-CoA hydrolase (153 aa).

Aspartate 21 is an active-site residue.

It belongs to the 4-hydroxybenzoyl-CoA thioesterase family. DHNA-CoA hydrolase subfamily.

It catalyses the reaction 1,4-dihydroxy-2-naphthoyl-CoA + H2O = 1,4-dihydroxy-2-naphthoate + CoA + H(+). It participates in cofactor biosynthesis; phylloquinone biosynthesis. It functions in the pathway quinol/quinone metabolism; 1,4-dihydroxy-2-naphthoate biosynthesis; 1,4-dihydroxy-2-naphthoate from chorismate: step 7/7. In terms of biological role, catalyzes the hydrolysis of 1,4-dihydroxy-2-naphthoyl-CoA (DHNA-CoA) to 1,4-dihydroxy-2-naphthoate (DHNA), a reaction involved in phylloquinone (vitamin K1) biosynthesis. The polypeptide is 1,4-dihydroxy-2-naphthoyl-CoA hydrolase (Synechococcus sp. (strain WH7803)).